The following is a 642-amino-acid chain: MPLLTRITGPRDLDRLSLEELTQLAEEIRTFLVDAVSKTGGHLGPNLGVVELTLALHRVFESPKDKVLWDTGHQSYVHKLLTGRQDFSKLKMKGGLSGYPSQGESEHDVIENSHASTVLGWADGIAKANQVMERDDHVVAVIGDGALTGGMAWEALNNIAAAKDRPLVIVVNDNERSYAPTIGGLANHLATLRTTDGYERFLARTKEVLERTPVVGRPLYDTLHGAKKGLKDFIAPQGMFEDLGLKYVGPIDGHDLEALESALTRAKRFGGPVIVHCLTEKGRGYQPALQDEADRFHAVGKIHPDTGLPISTSGADWTSVFGDEMLKLGKEREDVVAITAAMLQPVGLDKFAKAFPDRVYDVGIAEQHGAVSAAGLAHGGVHPVFAVYATFLNRAFDQVLMDVALHKCGVTFVLDRAGVTGTDGASHNGMWDMSILQVVPGLRLAAPRDADQVRAQLREAVVVDDAPTVVRFSKGAVGPAVPAVGRVGGMDVLRAPGTGTPDVLLVSVGALAPMCLEVADLLNKQGISTTVVDPRWVKPVDEAMAPLAERHRVVVTVEDNSRVGGVGSAVAQALRDAGVDVPLRDFGIPPRFLDHASRAEVLAEIGLTAPDIARQVTGLVARLDGRYDRAGAEVDQVEAARD.

Thiamine diphosphate-binding positions include histidine 73 and 113–115 (SHA). Aspartate 144 serves as a coordination point for Mg(2+). Thiamine diphosphate is bound by residues 145-146 (GA), asparagine 174, tyrosine 285, and glutamate 366. Asparagine 174 lines the Mg(2+) pocket.

The protein belongs to the transketolase family. DXPS subfamily. Homodimer. Requires Mg(2+) as cofactor. It depends on thiamine diphosphate as a cofactor.

It catalyses the reaction D-glyceraldehyde 3-phosphate + pyruvate + H(+) = 1-deoxy-D-xylulose 5-phosphate + CO2. It participates in metabolic intermediate biosynthesis; 1-deoxy-D-xylulose 5-phosphate biosynthesis; 1-deoxy-D-xylulose 5-phosphate from D-glyceraldehyde 3-phosphate and pyruvate: step 1/1. Catalyzes the acyloin condensation reaction between C atoms 2 and 3 of pyruvate and glyceraldehyde 3-phosphate to yield 1-deoxy-D-xylulose-5-phosphate (DXP). The chain is 1-deoxy-D-xylulose-5-phosphate synthase 2 from Streptomyces coelicolor (strain ATCC BAA-471 / A3(2) / M145).